Here is a 627-residue protein sequence, read N- to C-terminus: uncharacterized protein (627 aa).

A WH1 domain is found at Gly-21 to Ser-136. A disordered region spans residues Arg-310–Val-347.

This is an uncharacterized protein from Caenorhabditis elegans.